The primary structure comprises 323 residues: MKYLDVDGIGQVSRIGLGTWQFGSREWGYGDRYATGAARDIVKRARALGVTLFDTAEIYGLGKSERILGEALGDDRTEVVVASKVFPVAPFPAVIKNRERASARRLQLNRIPLYQIHQPNPVVPDSVIMPGMRDLLDSGDIGAAGVSNYSLARWRKADAALGRPVVSNQVHFSLAHPDALEDLVPFAELENRIVIAYSPLAQGLLGGKYGLENRPGGVRALNPLFGTENLRRIEPLLATLRAIAVDVDAKPAQVALAWLISLPGVVAIPGASSVEQLEFNVAAADIELSAQSRDALTDAARAFRPVSTGRFLTDMVREKVSRR.

Y59 functions as the Proton donor in the catalytic mechanism. 198-208 (SPLAQGLLGGK) is an NADP(+) binding site.

The protein belongs to the aldo/keto reductase family. Aldo/keto reductase 2 subfamily.

This is an uncharacterized protein from Mycobacterium tuberculosis (strain CDC 1551 / Oshkosh).